The following is a 344-amino-acid chain: Glyceraldehyde-3-phosphate dehydrogenase (344 aa).

NAD(+) is bound by residues 11–12 (TI) and G110. D-glyceraldehyde 3-phosphate is bound at residue 139-141 (SCN). Catalysis depends on C140, which acts as the Nucleophile. Residue R169 participates in NAD(+) binding. Residue 195-196 (HG) coordinates D-glyceraldehyde 3-phosphate. An NAD(+)-binding site is contributed by Q302.

It belongs to the glyceraldehyde-3-phosphate dehydrogenase family. In terms of assembly, homotetramer.

The protein resides in the cytoplasm. The catalysed reaction is D-glyceraldehyde 3-phosphate + phosphate + NADP(+) = (2R)-3-phospho-glyceroyl phosphate + NADPH + H(+). It carries out the reaction D-glyceraldehyde 3-phosphate + phosphate + NAD(+) = (2R)-3-phospho-glyceroyl phosphate + NADH + H(+). It functions in the pathway carbohydrate degradation; glycolysis; pyruvate from D-glyceraldehyde 3-phosphate: step 1/5. The polypeptide is Glyceraldehyde-3-phosphate dehydrogenase (Pyrobaculum arsenaticum (strain DSM 13514 / JCM 11321 / PZ6)).